A 359-amino-acid chain; its full sequence is MSKDRDGRRTSRRGTLKKIGGFSLGALSFGAVGRTQAATGSSVTTADIAPPGPNGDPKSVQIDDKYTGAEMYGEGDFRVGLGTDLTMYPPVYRESLGNGSGGWEFDFTVCGSTACRFVDSNGDVKEDDKAKEMWWQEINFNDINQDLYSRNDSDWVGSTPADTQPEFDYTEFALARDGVTLALTALNPAMGSLALGATYFLSDMVNWIASQHEDDSSLKRKWDYDGLSGPLYADSSTYLLARDEMTSNSYESFTIDNIAVAFPEFPVRTKYYVTFTAPDDPSTQSISTLEEEGIYRVPATEVAAARPPGSRRSKSAADEMVYVADPKKFIEVEPVKNPSIPDRIYEEIEQKKKQRSRKQ.

The signal sequence occupies residues 1–46 (MSKDRDGRRTSRRGTLKKIGGFSLGALSFGAVGRTQAATGSSVTTA). Disordered regions lie at residues 40-59 (GSSV…DPKS) and 340-359 (IPDR…SRKQ).

Its subcellular location is the secreted. Functionally, has antibacterial activity against other haloarchaeons. Interacts with the membrane of the target cells where it causes permeability changes that result in an ionic imbalance leading to cell lysis and death. This is Halocin-H4 (halH4) from Haloferax mediterranei (strain ATCC 33500 / DSM 1411 / JCM 8866 / NBRC 14739 / NCIMB 2177 / R-4) (Halobacterium mediterranei).